The sequence spans 389 residues: Dihydroorotase (389 aa).

Zn(2+)-binding residues include H51 and H53. Substrate is bound by residues 53–55 (HVR) and N85. The Zn(2+) site is built by K133, H158, H193, and D256. K133 carries the N6-carboxylysine modification. Residue D256 is part of the active site. Substrate-binding positions include H260 and 274 to 275 (PG).

It belongs to the metallo-dependent hydrolases superfamily. DHOase family. Class I DHOase subfamily. Requires Zn(2+) as cofactor.

The catalysed reaction is (S)-dihydroorotate + H2O = N-carbamoyl-L-aspartate + H(+). It participates in pyrimidine metabolism; UMP biosynthesis via de novo pathway; (S)-dihydroorotate from bicarbonate: step 3/3. Catalyzes the reversible cyclization of carbamoyl aspartate to dihydroorotate. The sequence is that of Dihydroorotase from Sulfolobus acidocaldarius (strain ATCC 33909 / DSM 639 / JCM 8929 / NBRC 15157 / NCIMB 11770).